The primary structure comprises 342 residues: Transmembrane protein 268 (342 aa).

The interval 1-30 (MACEPQVDPGATGPLPPSSPGWSALPGGSP) is disordered. The next 2 membrane-spanning stretches (helical) occupy residues 105–125 (AFAV…SQMF) and 132–152 (AGML…VLVF).

As to quaternary structure, interacts with ITGAM; this interaction inhibits ITGAM degradation via the endosome-lysosome pathway. Interacts with ITGB4; this interaction prevents ITGB4 degradation.

It localises to the cell membrane. Functionally, stabilizes cell surface expression of ITGAM and participates in the adhesion and migration of phagocytes during bacterial clearance. The protein is Transmembrane protein 268 of Homo sapiens (Human).